Here is a 346-residue protein sequence, read N- to C-terminus: Glycerol-3-phosphate dehydrogenase [NAD(P)+] (346 aa).

4 residues coordinate NADPH: serine 15, tryptophan 16, arginine 36, and lysine 110. Sn-glycerol 3-phosphate is bound by residues lysine 110, glycine 139, and serine 141. Alanine 143 provides a ligand contact to NADPH. 5 residues coordinate sn-glycerol 3-phosphate: lysine 194, aspartate 247, serine 257, arginine 258, and asparagine 259. Lysine 194 functions as the Proton acceptor in the catalytic mechanism. Position 258 (arginine 258) interacts with NADPH. NADPH-binding residues include valine 282 and glutamate 284.

This sequence belongs to the NAD-dependent glycerol-3-phosphate dehydrogenase family.

Its subcellular location is the cytoplasm. The catalysed reaction is sn-glycerol 3-phosphate + NAD(+) = dihydroxyacetone phosphate + NADH + H(+). The enzyme catalyses sn-glycerol 3-phosphate + NADP(+) = dihydroxyacetone phosphate + NADPH + H(+). It functions in the pathway membrane lipid metabolism; glycerophospholipid metabolism. Catalyzes the reduction of the glycolytic intermediate dihydroxyacetone phosphate (DHAP) to sn-glycerol 3-phosphate (G3P), the key precursor for phospholipid synthesis. This is Glycerol-3-phosphate dehydrogenase [NAD(P)+] from Xylella fastidiosa (strain Temecula1 / ATCC 700964).